Consider the following 443-residue polypeptide: Proline--tRNA ligase (443 aa).

It belongs to the class-II aminoacyl-tRNA synthetase family. ProS type 2 subfamily. Homodimer.

The protein resides in the cytoplasm. The catalysed reaction is tRNA(Pro) + L-proline + ATP = L-prolyl-tRNA(Pro) + AMP + diphosphate. In terms of biological role, catalyzes the attachment of proline to tRNA(Pro) in a two-step reaction: proline is first activated by ATP to form Pro-AMP and then transferred to the acceptor end of tRNA(Pro). The polypeptide is Proline--tRNA ligase (Zymomonas mobilis subsp. mobilis (strain ATCC 10988 / DSM 424 / LMG 404 / NCIMB 8938 / NRRL B-806 / ZM1)).